Consider the following 382-residue polypeptide: Alkanesulfonate monooxygenase (382 aa).

This sequence belongs to the SsuD family.

The catalysed reaction is an alkanesulfonate + FMNH2 + O2 = an aldehyde + FMN + sulfite + H2O + 2 H(+). Its function is as follows. Catalyzes the desulfonation of aliphatic sulfonates. This is Alkanesulfonate monooxygenase from Pseudomonas putida (strain ATCC 700007 / DSM 6899 / JCM 31910 / BCRC 17059 / LMG 24140 / F1).